Here is a 529-residue protein sequence, read N- to C-terminus: Inosine-5'-monophosphate dehydrogenase (529 aa).

2 CBS domains span residues 129–185 (MVTD…SKQV) and 189–246 (MTKT…PLAT). NAD(+) is bound by residues Asp-283 and 334-336 (GVG). K(+)-binding residues include Gly-336 and Gly-338. IMP is bound at residue Ser-339. Cys-341 contributes to the K(+) binding site. The active-site Thioimidate intermediate is Cys-341. Residues 374–376 (DGG), 397–398 (GS), and 421–425 (YRGMG) each bind IMP. Arg-443 serves as the catalytic Proton acceptor. IMP is bound at residue Glu-458. K(+) contacts are provided by Glu-511, Ser-512, and His-513.

This sequence belongs to the IMPDH/GMPR family. As to quaternary structure, homotetramer. The cofactor is K(+).

It catalyses the reaction IMP + NAD(+) + H2O = XMP + NADH + H(+). It functions in the pathway purine metabolism; XMP biosynthesis via de novo pathway; XMP from IMP: step 1/1. With respect to regulation, mycophenolic acid (MPA) is a non-competitive inhibitor that prevents formation of the closed enzyme conformation by binding to the same site as the amobile flap. In contrast, mizoribine monophosphate (MZP) is a competitive inhibitor that induces the closed conformation. MPA is a potent inhibitor of mammalian IMPDHs but a poor inhibitor of the bacterial enzymes. MZP is a more potent inhibitor of bacterial IMPDH. Catalyzes the conversion of inosine 5'-phosphate (IMP) to xanthosine 5'-phosphate (XMP), the first committed and rate-limiting step in the de novo synthesis of guanine nucleotides, and therefore plays an important role in the regulation of cell growth. The protein is Inosine-5'-monophosphate dehydrogenase of Mycobacterium leprae (strain TN).